Consider the following 497-residue polypeptide: tRNA (adenine(58)-N(1))-methyltransferase non-catalytic subunit TRM6 (497 aa).

The tract at residues 69-102 (TNGGSLQPKKKKEEPTSETKEAGTDNRNIIDDGK) is disordered. The span at 79 to 102 (KKEEPTSETKEAGTDNRNIIDDGK) shows a compositional bias: basic and acidic residues. The interval 94 to 104 (NRNIIDDGKSQ) is substrate. Threonine 107 is modified (phosphothreonine). 2 substrate regions span residues 145–154 (KYIKKKKKKY) and 175–182 (REPGKINH). The disordered stretch occupies residues 276-354 (SSEPKDIASV…EKQRRQEEQK (79 aa)). A phosphoserine mark is found at serine 298 and serine 305. Positions 311–354 (ESNHPEEQERMEIVSQDPDYKEPKESGSKKDYIQEKQRRQEEQK) are enriched in basic and acidic residues. 2 residues coordinate substrate: arginine 349 and arginine 377. Substrate stretches follow at residues 415–423 (RERGGVINL) and 434–441 (QVLPDRSH). The tract at residues 468 to 497 (PSLKSSTSTLESHKTEEPAAKKRKCPESDS) is disordered. The span at 478-497 (ESHKTEEPAAKKRKCPESDS) shows a compositional bias: basic and acidic residues.

It belongs to the TRM6/GCD10 family. In terms of assembly, heterotetramer; composed of two copies of TRMT6 and two copies of TRMT61A.

The protein resides in the nucleus. Its function is as follows. Substrate-binding subunit of tRNA (adenine-N(1)-)-methyltransferase, which catalyzes the formation of N(1)-methyladenine at position 58 (m1A58) in initiator methionyl-tRNA. Together with the TRMT61A catalytic subunit, part of a mRNA N(1)-methyltransferase complex that mediates methylation of adenosine residues at the N(1) position of a small subset of mRNAs: N(1) methylation takes place in tRNA T-loop-like structures of mRNAs and is only present at low stoichiometries. The chain is tRNA (adenine(58)-N(1))-methyltransferase non-catalytic subunit TRM6 (TRMT6) from Bos taurus (Bovine).